Reading from the N-terminus, the 479-residue chain is Zinc metalloproteinase/disintegrin (479 aa).

The N-terminal stretch at 1–20 (MIQVLLVTICLAAFPYQGSS) is a signal peptide. A propeptide spanning residues 21–187 (IILESGKVND…PIKKASQLIV (167 aa)) is cleaved from the precursor. Residues 193-390 (RYMEIVIVVD…ENPPCILNKP (198 aa)) form the Peptidase M12B domain. The Ca(2+) site is built by Glu-196 and Asp-280. Cystine bridges form between Cys-304/Cys-385, Cys-344/Cys-369, and Cys-346/Cys-352. His-329 lines the Zn(2+) pocket. The active site involves Glu-330. Residues His-333 and His-339 each contribute to the Zn(2+) site. Cys-385 and Asn-388 together coordinate Ca(2+). Residues 390–414 (PLRTDTVSTPVSGNELLEAGKDYDR) constitute a propeptide that is removed on maturation. The Disintegrin domain maps to 398 to 479 (TPVSGNELLE…ADCPRNPYHA (82 aa)). 3 disulfides stabilise this stretch: Cys-435/Cys-441, Cys-440/Cys-465, and Cys-453/Cys-472. The short motif at 457 to 459 (RGD) is the Cell attachment site element.

Belongs to the venom metalloproteinase (M12B) family. P-II subfamily. P-IIa sub-subfamily. Monomer. Zn(2+) is required as a cofactor. As to expression, expressed by the venom gland.

It localises to the secreted. Functionally, snake venom metalloproteinase that impairs hemostasis in the envenomed animal. In terms of biological role, inhibits platelet aggregation induced by ADP, thrombin, platelet-activating factor and collagen. Acts by inhibiting fibrinogen interaction with platelet receptors GPIIb/GPIIIa (ITGA2B/ITGB3). This Deinagkistrodon acutus (Hundred-pace snake) protein is Zinc metalloproteinase/disintegrin.